Consider the following 110-residue polypeptide: Insulin (110 aa).

The first 23 residues, 1 to 23 (MALWLQAFTLLVLLVLSSPGAQS), serve as a signal peptide directing secretion. Disulfide bonds link Cys-30/Cys-96, Cys-42/Cys-109, and Cys-95/Cys-100. Residues 56-87 (DVDPLLGFLSPKSAQENEADEYPYKDQGDLKV) constitute a propeptide, c peptide.

It belongs to the insulin family. Heterodimer of a B chain and an A chain linked by two disulfide bonds.

The protein localises to the secreted. Functionally, insulin decreases blood glucose concentration. It increases cell permeability to monosaccharides, amino acids and fatty acids. It accelerates glycolysis, the pentose phosphate cycle, and glycogen synthesis in liver. This is Insulin (ins) from Pantodon buchholzi (Freshwater butterflyfish).